We begin with the raw amino-acid sequence, 1018 residues long: Serine/threonine-protein phosphatase BSL2 (1018 aa).

The segment at 1 to 75 is disordered; that stretch reads MDEDSSMVAD…AAAVVGQEQQ (75 aa). Over residues 41–57 the composition is skewed to pro residues; the sequence is SPPPEGGSVPTPPPSDP. Positions 63–75 are enriched in low complexity; that stretch reads QQQAAAVVGQEQQ. 5 Kelch repeats span residues 149–195, 253–301, 306–356, 362–409, and 430–479; these read TSAG…VATA, YLMA…TASA, LLLL…VFVN, SGGA…DAAG, and LIFI…RLPG. The tract at residues 569–590 is disordered; sequence DRDCGAEATPSGKPTFSLIKPD. At serine 627 the chain carries Phosphoserine. Residues aspartate 720, histidine 722, aspartate 754, and asparagine 786 each coordinate Mn(2+). Histidine 787 (proton donor) is an active-site residue. Residues histidine 839 and histidine 918 each coordinate Mn(2+). Phosphoserine is present on serine 975. Over residues 994–1011 the composition is skewed to polar residues; the sequence is ANRPATPTRGRPQNSNDR. The interval 994–1018 is disordered; that stretch reads ANRPATPTRGRPQNSNDRGGSLAWM.

The protein belongs to the PPP phosphatase family. BSU subfamily. As to quaternary structure, interacts with BSK8. Mn(2+) is required as a cofactor. As to expression, expressed throughout the plant, with a higher level in younger parts.

The protein localises to the cytoplasm. It is found in the cell membrane. Its subcellular location is the nucleus. The catalysed reaction is O-phospho-L-seryl-[protein] + H2O = L-seryl-[protein] + phosphate. The enzyme catalyses O-phospho-L-threonyl-[protein] + H2O = L-threonyl-[protein] + phosphate. Functionally, phosphatase involved in elongation process, probably by acting as a regulator of brassinolide signaling. In Arabidopsis thaliana (Mouse-ear cress), this protein is Serine/threonine-protein phosphatase BSL2 (BSL2).